Consider the following 136-residue polypeptide: Glycine-rich RNA-binding protein 4, mitochondrial (136 aa).

The transit peptide at 1-33 directs the protein to the mitochondrion; it reads MAFCNKLSGILRQGVSQSSNGPVTSMLGSLRYM. The RRM domain maps to 35–113; sequence SKLFVGGLSW…RQIRVNLATE (79 aa). S43 bears the Phosphoserine mark. The interval 113 to 136 is disordered; the sequence is ERSSAPRSSFGGGGGYGGGGGGGY. Gly residues predominate over residues 122 to 136; the sequence is FGGGGGYGGGGGGGY. A glycine-rich (GR) required for cell-to-cell movement region spans residues 123–135; the sequence is GGGGGYGGGGGGG.

This sequence belongs to the GR-RBP family. Binds to small phloem-mobile single-stranded RNAs (ss-sRNA, e.g. small interfering RNA (siRNA) and microRNA (miRNA)) in the phloeme exudate, including viral-derived sRNA (vsiRNA). As to expression, abundantly expressed in young plants, root tips, and flowers, but weakly in mature leaves and stems, implying highly expression in actively proliferating organs.

It localises to the mitochondrion. It is found in the secreted. Its function is as follows. Possibly has a role in RNA transcription or processing during stress. Binds sequence non-specifically to RNAs and DNAs. Mediates cell-to-cell trafficking of RNA interference (RNAi) signals (small RNAs (sRNA), e.g. small interfering RNA (siRNA) and microRNA (miRNA)) which regulate growth and development, as well as responses to environmental inputs, including pathogen attack; can compromise zucchini yellow mosaic virus (ZYMV) and tobacco rattle virus (TRV) infections at the early stage. The chain is Glycine-rich RNA-binding protein 4, mitochondrial from Arabidopsis thaliana (Mouse-ear cress).